Reading from the N-terminus, the 420-residue chain is Methionine aminopeptidase 2 (420 aa).

The disordered stretch occupies residues 1–48 (MSDAIAKDAVNTSSEKEPVSATPELKTSGSPDAAVSSGDKKKKKKKKK). His-172 is a binding site for substrate. Asp-192, Asp-203, and His-272 together coordinate a divalent metal cation. His-280 serves as a coordination point for substrate. The a divalent metal cation site is built by Glu-305 and Glu-401.

The protein belongs to the peptidase M24A family. Methionine aminopeptidase eukaryotic type 2 subfamily. Requires Co(2+) as cofactor. It depends on Zn(2+) as a cofactor. Mn(2+) serves as cofactor. The cofactor is Fe(2+).

The protein resides in the cytoplasm. The enzyme catalyses Release of N-terminal amino acids, preferentially methionine, from peptides and arylamides.. In terms of biological role, cotranslationally removes the N-terminal methionine from nascent proteins. The N-terminal methionine is often cleaved when the second residue in the primary sequence is small and uncharged (Met-Ala-, Cys, Gly, Pro, Ser, Thr, or Val). The protein is Methionine aminopeptidase 2 of Lachancea thermotolerans (strain ATCC 56472 / CBS 6340 / NRRL Y-8284) (Yeast).